The sequence spans 499 residues: Replication factor C large subunit (499 aa).

50 to 57 (GPPGVGKT) provides a ligand contact to ATP. Residues 428–499 (EAERRVEAAE…QATLFDFLKK (72 aa)) form a disordered region. Residues 436 to 472 (AEEEETMEAGEPEEELEEVEEEELTEEELEEAEEEIE) show a composition bias toward acidic residues. Positions 473 to 484 (TVGKKEKPEKEK) are enriched in basic and acidic residues.

Belongs to the activator 1 small subunits family. RfcL subfamily. As to quaternary structure, heteromultimer composed of small subunits (RfcS) and large subunits (RfcL).

Functionally, part of the RFC clamp loader complex which loads the PCNA sliding clamp onto DNA. The sequence is that of Replication factor C large subunit from Thermococcus kodakarensis (strain ATCC BAA-918 / JCM 12380 / KOD1) (Pyrococcus kodakaraensis (strain KOD1)).